The primary structure comprises 436 residues: Histidinol dehydrogenase (436 aa).

Residues Ser237, Gln259, and His262 each coordinate substrate. 2 residues coordinate Zn(2+): Gln259 and His262. Active-site proton acceptor residues include Glu327 and His328. 4 residues coordinate substrate: His328, Asp361, Glu415, and His420. Asp361 serves as a coordination point for Zn(2+). Zn(2+) is bound at residue His420.

It belongs to the histidinol dehydrogenase family. The cofactor is Zn(2+).

The catalysed reaction is L-histidinol + 2 NAD(+) + H2O = L-histidine + 2 NADH + 3 H(+). Its pathway is amino-acid biosynthesis; L-histidine biosynthesis; L-histidine from 5-phospho-alpha-D-ribose 1-diphosphate: step 9/9. Functionally, catalyzes the sequential NAD-dependent oxidations of L-histidinol to L-histidinaldehyde and then to L-histidine. This chain is Histidinol dehydrogenase, found in Helicobacter hepaticus (strain ATCC 51449 / 3B1).